The chain runs to 709 residues: Phosphoribosylformylglycinamidine synthase subunit PurL (709 aa).

Residue His36 is part of the active site. 2 residues coordinate ATP: Tyr39 and Lys80. Glu82 contacts Mg(2+). Residues 83–86 (SHNH) and Arg105 contribute to the substrate site. The Proton acceptor role is filled by His84. Asp106 serves as a coordination point for Mg(2+). Gln226 is a substrate binding site. Residue Asp252 participates in Mg(2+) binding. 294 to 296 (ETQ) lines the substrate pocket. ATP is bound by residues Asp470 and Gly507. Ser510 contacts substrate.

The protein belongs to the FGAMS family. In terms of assembly, monomer. Part of the FGAM synthase complex composed of 1 PurL, 1 PurQ and 2 PurS subunits.

It localises to the cytoplasm. The catalysed reaction is N(2)-formyl-N(1)-(5-phospho-beta-D-ribosyl)glycinamide + L-glutamine + ATP + H2O = 2-formamido-N(1)-(5-O-phospho-beta-D-ribosyl)acetamidine + L-glutamate + ADP + phosphate + H(+). Its pathway is purine metabolism; IMP biosynthesis via de novo pathway; 5-amino-1-(5-phospho-D-ribosyl)imidazole from N(2)-formyl-N(1)-(5-phospho-D-ribosyl)glycinamide: step 1/2. Functionally, part of the phosphoribosylformylglycinamidine synthase complex involved in the purines biosynthetic pathway. Catalyzes the ATP-dependent conversion of formylglycinamide ribonucleotide (FGAR) and glutamine to yield formylglycinamidine ribonucleotide (FGAM) and glutamate. The FGAM synthase complex is composed of three subunits. PurQ produces an ammonia molecule by converting glutamine to glutamate. PurL transfers the ammonia molecule to FGAR to form FGAM in an ATP-dependent manner. PurS interacts with PurQ and PurL and is thought to assist in the transfer of the ammonia molecule from PurQ to PurL. The protein is Phosphoribosylformylglycinamidine synthase subunit PurL of Saccharolobus solfataricus (strain ATCC 35092 / DSM 1617 / JCM 11322 / P2) (Sulfolobus solfataricus).